Consider the following 304-residue polypeptide: Galactose 1-dehydrogenase (304 aa).

Belongs to the Gfo/Idh/MocA family. As to quaternary structure, homodimer.

The protein localises to the cytoplasm. The catalysed reaction is D-galactose + NAD(+) = D-galactono-1,4-lactone + NADH + H(+). Its pathway is carbohydrate metabolism; galactose metabolism. In terms of biological role, catalyzes the dehydrogenation of D-galactose by either NAD(+) or NADP(+). Oxidizes following sugars in decreasing order: D-fucose &gt; D-galactose &gt; L-arabinose &gt; 2-deoxy-D-galactose &gt;&gt; 4-deoxy-D-galactose &gt; 2-deoxy-2-amino-D-galactose. The protein is Galactose 1-dehydrogenase (gal) of Pseudomonas fluorescens.